The chain runs to 412 residues: Multifunctional CCA protein (412 aa).

Residues glycine 8 and arginine 11 each coordinate ATP. The CTP site is built by glycine 8 and arginine 11. Residues aspartate 21 and aspartate 23 each coordinate Mg(2+). Arginine 91, arginine 137, and arginine 140 together coordinate ATP. The CTP site is built by arginine 91, arginine 137, and arginine 140. Residues 228-329 enclose the HD domain; the sequence is TGIHTLMTLS…VKLFDSIDAW (102 aa).

Belongs to the tRNA nucleotidyltransferase/poly(A) polymerase family. Bacterial CCA-adding enzyme type 1 subfamily. As to quaternary structure, monomer. Can also form homodimers and oligomers. Requires Mg(2+) as cofactor. Ni(2+) is required as a cofactor.

It carries out the reaction a tRNA precursor + 2 CTP + ATP = a tRNA with a 3' CCA end + 3 diphosphate. It catalyses the reaction a tRNA with a 3' CCA end + 2 CTP + ATP = a tRNA with a 3' CCACCA end + 3 diphosphate. Catalyzes the addition and repair of the essential 3'-terminal CCA sequence in tRNAs without using a nucleic acid template. Adds these three nucleotides in the order of C, C, and A to the tRNA nucleotide-73, using CTP and ATP as substrates and producing inorganic pyrophosphate. tRNA 3'-terminal CCA addition is required both for tRNA processing and repair. Also involved in tRNA surveillance by mediating tandem CCA addition to generate a CCACCA at the 3' terminus of unstable tRNAs. While stable tRNAs receive only 3'-terminal CCA, unstable tRNAs are marked with CCACCA and rapidly degraded. This chain is Multifunctional CCA protein, found in Escherichia coli O8 (strain IAI1).